A 244-amino-acid polypeptide reads, in one-letter code: Extracellular superoxide dismutase [Cu-Zn] (244 aa).

An N-terminal signal peptide occupies residues 1–15; sequence MVAFLFCNLLLVACG. 2 cysteine pairs are disulfide-bonded: Cys70–Cys215 and Cys132–Cys214. The N-linked (GlcNAc...) asparagine glycan is linked to Asn114. Cu cation-binding residues include His121, His123, and His138. Zn(2+)-binding residues include His138, His146, His149, and Asp152. His188 provides a ligand contact to Cu cation. Residues 224–244 form a disordered region; sequence AWESQTKERKKRRRESECKTT.

The protein belongs to the Cu-Zn superoxide dismutase family. In terms of assembly, homodimer. Interacts with ATP7A; this interaction is copper-dependent and is required for SOD3 activity. The cofactor is Cu cation. Requires Zn(2+) as cofactor.

It is found in the secreted. The protein resides in the extracellular space. The protein localises to the golgi apparatus. It localises to the trans-Golgi network. It carries out the reaction 2 superoxide + 2 H(+) = H2O2 + O2. Its function is as follows. Protect the extracellular space from toxic effect of reactive oxygen intermediates by converting superoxide radicals into hydrogen peroxide and oxygen. In Rattus norvegicus (Rat), this protein is Extracellular superoxide dismutase [Cu-Zn] (Sod3).